Consider the following 615-residue polypeptide: Protein ENHANCED DISEASE RESISTANCE 4 (615 aa).

3 disordered regions span residues 46–271, 292–336, and 549–592; these read IAPS…DDDE, YKEQ…GRQG, and THDI…RGSP. Polar residues-rich tracts occupy residues 63–89 and 119–129; these read NEPQ…SSPG and GDGTNEIQEQE. The stretch at 104 to 129 forms a coiled coil; it reads MESTEKELDDLELSNGDGTNEIQEQE. A compositionally biased stretch (basic and acidic residues) spans 134–148; sequence DSEKNEREDNSRLES. Over residues 159–168 the composition is skewed to low complexity; the sequence is GSGSSSGSLS. 2 stretches are compositionally biased toward polar residues: residues 296–314 and 552–564; these read GASS…ITTY and INAN…TSES. Positions 565-577 are enriched in basic and acidic residues; that stretch reads PIDKAPSKPEKLR.

In terms of assembly, interacts with RLK902. Binds and recruits EDR1 at the powdery mildew (e.g. G.cichoracearum) penetration site on the plasma membrane. Interacts with CHC2. Expressed in stems and rosette leaves, and weakly in inflorescences. Not detected in roots.

Its subcellular location is the cell membrane. It localises to the endosome. Plays a negative role in salicylic acid (SA)-mediated resistance to powdery mildew (e.g. Golovinomyces cichoracearum). May modulate plant immunity by regulating the relocation of EDR1 by interacting with CHC2 and modulating endocytosis. This Arabidopsis thaliana (Mouse-ear cress) protein is Protein ENHANCED DISEASE RESISTANCE 4.